We begin with the raw amino-acid sequence, 677 residues long: Heat shock transcription factor (677 aa).

Disordered stretches follow at residues 1–56 and 115–164; these read MGHN…DDSN and STSS…SQQP. Composition is skewed to polar residues over residues 115–131 and 143–164; these read STSSAAKLSDGDLTNAT and QPSSESQSHSNGYHKQGQSQQP. The DNA-binding element occupies 193–297; that stretch reads ARPAFVNKLW…EYLLENIVRQ (105 aa). The interval 320-373 is involved in trimerization; that stretch reads ELETVKYNQLAIAEDLKRITKDNEMLWKENMMARERHQSQQQVLEKLLRFLSSV. Composition is skewed to low complexity over residues 400–416 and 457–501; these read NHMSNNNHNNTGNINPN and RSMS…QGQQ. Disordered regions lie at residues 400-444, 457-541, and 606-677; these read NHMS…VPLQ, RSMS…NQYS, and KLNP…RRAA. The tract at residues 466–677 is activatory; the sequence is NLNQRQSPQN…NNGQKRRRAA (212 aa). Composition is skewed to polar residues over residues 502 to 541 and 629 to 641; these read FSYPIQGGNQMMNQLGSPIGTQVGSPVGSQYGNQYGNQYS and FANTGGSGQSEQP. The segment covering 650-669 has biased composition (basic and acidic residues); it reads EELRNSRLHEPDRSFEEKNN.

The protein belongs to the HSF family. Homotrimer. Homotrimerization increases the affinity of HSF1 to DNA. Post-translationally, exhibits temperature-dependent phosphorylation.

The protein localises to the nucleus. DNA-binding transcription factor that specifically binds heat shock promoter elements (HSE) and activates transcription. The polypeptide is Heat shock transcription factor (Kluyveromyces lactis (strain ATCC 8585 / CBS 2359 / DSM 70799 / NBRC 1267 / NRRL Y-1140 / WM37) (Yeast)).